Reading from the N-terminus, the 552-residue chain is Dihydroxy-acid dehydratase (552 aa).

Asp78 contacts Mg(2+). Cys119 lines the [2Fe-2S] cluster pocket. Mg(2+) contacts are provided by Asp120 and Lys121. The residue at position 121 (Lys121) is an N6-carboxylysine. Cys191 provides a ligand contact to [2Fe-2S] cluster. Mg(2+) is bound at residue Glu442. Ser468 acts as the Proton acceptor in catalysis.

It belongs to the IlvD/Edd family. Homodimer. [2Fe-2S] cluster is required as a cofactor. Mg(2+) serves as cofactor.

It carries out the reaction (2R)-2,3-dihydroxy-3-methylbutanoate = 3-methyl-2-oxobutanoate + H2O. The enzyme catalyses (2R,3R)-2,3-dihydroxy-3-methylpentanoate = (S)-3-methyl-2-oxopentanoate + H2O. The protein operates within amino-acid biosynthesis; L-isoleucine biosynthesis; L-isoleucine from 2-oxobutanoate: step 3/4. It functions in the pathway amino-acid biosynthesis; L-valine biosynthesis; L-valine from pyruvate: step 3/4. Its function is as follows. Functions in the biosynthesis of branched-chain amino acids. Catalyzes the dehydration of (2R,3R)-2,3-dihydroxy-3-methylpentanoate (2,3-dihydroxy-3-methylvalerate) into 2-oxo-3-methylpentanoate (2-oxo-3-methylvalerate) and of (2R)-2,3-dihydroxy-3-methylbutanoate (2,3-dihydroxyisovalerate) into 2-oxo-3-methylbutanoate (2-oxoisovalerate), the penultimate precursor to L-isoleucine and L-valine, respectively. This is Dihydroxy-acid dehydratase from Moorella thermoacetica (strain ATCC 39073 / JCM 9320).